Consider the following 206-residue polypeptide: Large ribosomal subunit protein uL4 (206 aa).

Belongs to the universal ribosomal protein uL4 family. As to quaternary structure, part of the 50S ribosomal subunit.

In terms of biological role, one of the primary rRNA binding proteins, this protein initially binds near the 5'-end of the 23S rRNA. It is important during the early stages of 50S assembly. It makes multiple contacts with different domains of the 23S rRNA in the assembled 50S subunit and ribosome. Its function is as follows. Forms part of the polypeptide exit tunnel. The protein is Large ribosomal subunit protein uL4 of Rhodopseudomonas palustris (strain HaA2).